Here is a 338-residue protein sequence, read N- to C-terminus: Nodulation outer protein L (338 aa).

Polar residues predominate over residues 1–14 (MDINSTSPLNASPQ). Disordered stretches follow at residues 1-48 (MDIN…LPQV), 85-158 (TRER…DLET), 187-209 (SPAP…PHAR), and 230-259 (PQAG…SSAG). Residues 85–97 (TRERSPHPSEQRP) show a composition bias toward basic and acidic residues. The span at 126-138 (VGPSRSGPSQAGL) shows a compositional bias: polar residues. A compositionally biased stretch (polar residues) spans 242–258 (SGPSQARPSHAWPSSSA).

The protein localises to the secreted. Functionally, putative symbiotic effector that modulates nodulation in legumes. When delivered into the plant cell, modulates the activity of signal transduction pathways that culminate in activation of PR proteins. The chain is Nodulation outer protein L (nopL) from Sinorhizobium fredii (strain NBRC 101917 / NGR234).